The primary structure comprises 293 residues: Nucleotide-binding protein OB2468 (293 aa).

Glycine 14–threonine 21 serves as a coordination point for ATP. Aspartate 65–glycine 68 is a GTP binding site.

This sequence belongs to the RapZ-like family.

Its function is as follows. Displays ATPase and GTPase activities. This chain is Nucleotide-binding protein OB2468, found in Oceanobacillus iheyensis (strain DSM 14371 / CIP 107618 / JCM 11309 / KCTC 3954 / HTE831).